A 221-amino-acid polypeptide reads, in one-letter code: Toll/interleukin-1 receptor domain-containing adapter protein (221 aa).

The segment at 1–82 is disordered; that stretch reads MASSTSLPAP…HASDSGSSRW (82 aa). Residues 48–67 are compositionally biased toward low complexity; that stretch reads SQPTSQDSPLPPSLSSVTSP. Residues 84 to 213 form the TIR domain; that stretch reads KDYDVCVCHS…GGFRQVKEAV (130 aa). Cystine bridges form between cysteine 89–cysteine 134 and cysteine 142–cysteine 174.

Homodimer. Also forms heterodimers with MYD88. May interact with PIK3AP1. Interacts with TLR4 and IRAK2 via their respective TIR domains. Interacts with BMX and TBK1. Interacts with EIF2AK2. Does not interact with IRAK1, nor TLR9. Interacts with TLR2. Interacts with RAGE/AGER. As to quaternary structure, (Microbial infection) In case of infection, interacts with B.melitensis protein TcpB (AC Q8YF53); TcpB abolishes the TLR4-TIRAP interaction and downstream signaling. Post-translationally, phosphorylated by IRAK1 and IRAK4. Also phosphorylated by BTK. In terms of processing, polyubiquitinated. Polyubiquitination follows phosphorylation by BTK and leads to TIRAP degradation. As to expression, highly expressed in liver, kidney, spleen, skeletal muscle and heart. Also detected in peripheral blood leukocytes, lung, placenta, small intestine, thymus, colon and brain.

It localises to the cytoplasm. Its subcellular location is the cell membrane. It is found in the membrane. Its function is as follows. Adapter involved in TLR2, TLR4 and RAGE signaling pathways in the innate immune response. Acts via IRAK2 and TRAF-6, leading to the activation of NF-kappa-B, MAPK1, MAPK3 and JNK, and resulting in cytokine secretion and the inflammatory response. Positively regulates the production of TNF-alpha (TNF) and interleukin-6 (IL6). This chain is Toll/interleukin-1 receptor domain-containing adapter protein (TIRAP), found in Homo sapiens (Human).